The sequence spans 901 residues: Pantothenate kinase 2 (901 aa).

Over residues 1–10 the composition is skewed to acidic residues; sequence MAGQEDEYDP. The tract at residues 1–50 is disordered; sequence MAGQEDEYDPILDNKREAEAKSQVSVAADKNMAPSTSGTPIHRSGSRPQL. The interval 1-466 is pantothenate kinase; that stretch reads MAGQEDEYDP…LGDLDEKISW (466 aa). The tract at residues 467 to 901 is 4'-phosphopantetheine phosphatase; it reads MEKFVRRGTE…CVCRYEPPSL (435 aa). Mn(2+)-binding residues include Asp731, Asn732, and Asp767. The short motif at 851–855 is the Subfamily II EGMGR motif element; it reads EGMGR.

In the N-terminal section; belongs to the type II pantothenate kinase family. The protein in the C-terminal section; belongs to the damage-control phosphatase family. Phosphopantetheine phosphatase II subfamily. It depends on Mn(2+) as a cofactor. Ni(2+) is required as a cofactor. As to expression, highly expressed in leaves and developing seeds. Expressed in roots, stems and flowers.

It catalyses the reaction (R)-pantothenate + ATP = (R)-4'-phosphopantothenate + ADP + H(+). The enzyme catalyses (R)-4'-phosphopantothenate + H2O = (R)-pantothenate + phosphate. The catalysed reaction is (R)-4'-phosphopantetheine + H2O = (R)-pantetheine + phosphate. It carries out the reaction (R)-4'-phosphopantetheine sulfonate + H2O = (R)-pantetheine sulfonate + phosphate. It functions in the pathway cofactor biosynthesis; coenzyme A biosynthesis; CoA from (R)-pantothenate: step 1/5. Its activity is regulated as follows. Activity is strongly promoted by Co(2+), Ni(2+) and Mn(2+). Activity is inhibited by EDTA. Functionally, catalyzes the phosphorylation of pantothenate the first step in CoA biosynthesis. May play a role in the physiological regulation of the intracellular CoA concentration. Functionally redudant with PANK1. The phosphatase activity shows preference for normal or oxidatively damaged intermediates of 4'-phosphopantetheine, which provides strong indirect evidence that the phosphatase activity pre-empts damage in the CoA pathway. Hydrolyzing excess 4'-phosphopantetheine could constitute a directed overflow mechanism to prevent its oxidation to the S-sulfonate, sulfonate, or other forms. Hydrolyzing 4'-phosphopantetheine sulfonate or S-sulfonate would forestall their conversion to inactive forms of CoA and acyl carrier protein. The protein is Pantothenate kinase 2 (PANK2) of Arabidopsis thaliana (Mouse-ear cress).